A 362-amino-acid polypeptide reads, in one-letter code: Inactive 2'-5' oligoadenylate synthetase 1C (362 aa).

Belongs to the 2-5A synthase family. In terms of tissue distribution, expressed at highest level in brain with lesser amounts in spleen, kidney, stomach, liver, intestine, ovary, skin and testis. Not detected in lung, thymus, heart and uterus.

In terms of biological role, does not have 2'-5'-OAS activity, but can bind double-stranded RNA. This chain is Inactive 2'-5' oligoadenylate synthetase 1C, found in Mus musculus (Mouse).